The primary structure comprises 1366 residues: MAYSYTEKKRIRKDFGKLPPVLDVPYLLAIQLESYRNFLQEGKSLAERGELGLHGAFKSVFPMVSFSGNAALEYVDYRLGKPVFDVKECQLRGVTYAAPLRVRVRLIIYDKESSNKAIKDIREQEVYMGEIPLMTDNGTFVINGTERVIVSQLHRSPGVFFDHDRGKTHSSGKLLHSARIIPYRGSWLDFEFDPKDCVFVRIDRRRKLPATILLRALGYGTEQILDTFFDSTRFYLKRDGFEMDLVANRLRGETALFNIADANGELIVEEGRRITAKHIRVMEKSGLERLSVPLEYMLGKVTAKNLVHPATGELIAEANTELSVDLLEALVSSGITEVDTLYTNDLDNGPFISDTLRIDPTSNQLEALVEIYRMMRPGEPPTKESAEGLFQGLFFSEDRYDLSGVGRMKFNRRLGREEDTGAGVLDNDDIVAVLKTLLDIRNGNGMVDDIDHLGNRRVRSVGEMAENQFRVGLVRVERAVKERLSMAEADGLMPQDLLNAKPVAAAIKEFFGSSQLSQFMDQNNPLSEVTHKRRVSALGPGGLTRERAGFEVRDVHATHYGRVCPIETPEGPNIGLINSLSTYARTNSYGFLETPYRKIVDGKQTDETVYVSAIDEAKYVIAQASANVDAEGRLVDELVQVRHMHETTLIPKEKVNLMDVSPRQVVSVAASLIPFLEHDDANRALMGSNMQRQAVPTLKADKPVVGTGMEKNVAKDSGVCIVANRGGVIESVDASRIVVRVNSEETIAGEAGVDIYNLTKYVRSNQNTCINQRTLVMKGERIASGDIMADGPSVDMGELALGQNMRIAFMPWNGFNFEDSILVSERVVEEDRFTSIHIQELTCVARDTKLGPEEITADIPNVGEGALSKLDQSGIVYIGAEVEPGDILVGKVTPKGETQLTPEEKLLRAIFGEKASDVKDTSQRVKTGTRGTVIDVQVFTRDGIEKDDRAKFIEKSQLDQVRKDLNEEFRIVEKATFERLAEALIGQQAEGGPGLARNAIITEEYLANLDHPEWFKIRVANEDASEQLEKAQAALIERRKELDAKFEDKKRKLQTGDDLAPGVLKIVKVYVAIKRRIQPGDKMAGRHGNKGVISKIMPVEDMPYDENGDPVDIVLNPLGVPSRMNVGQVLETHLGAASKGLGRKINEMLVVEREKAEAVAELRSFLGEIYNGYEGDLRCARTEDLDSFTDEEILTLASNLTGGVPMASGAFDGAKESEIKRMLRLAGINESGQVKLFNGRTGDAFERPVTVGYMYMLKLNHLVDDKMHARSTGSYSLVTQQPLGGKAQFGGQRFGEMEVWALEAYGAAYTLQEMLTVKSDDVNGRTKMYKNIVDGDHRMEPGMPESFNVLVKEIRSLGIDIELENE.

Belongs to the RNA polymerase beta chain family. In terms of assembly, the RNAP catalytic core consists of 2 alpha, 1 beta, 1 beta' and 1 omega subunit. When a sigma factor is associated with the core the holoenzyme is formed, which can initiate transcription.

The enzyme catalyses RNA(n) + a ribonucleoside 5'-triphosphate = RNA(n+1) + diphosphate. Functionally, DNA-dependent RNA polymerase catalyzes the transcription of DNA into RNA using the four ribonucleoside triphosphates as substrates. The chain is DNA-directed RNA polymerase subunit beta from Marinomonas sp. (strain MWYL1).